The chain runs to 158 residues: 3-dehydroquinate dehydratase (158 aa).

Catalysis depends on Y22, which acts as the Proton acceptor. The substrate site is built by N74, H80, and D87. The Proton donor role is filled by H100. Substrate contacts are provided by residues 101-102 (IS) and R111.

The protein belongs to the type-II 3-dehydroquinase family. As to quaternary structure, homododecamer.

The enzyme catalyses 3-dehydroquinate = 3-dehydroshikimate + H2O. It participates in metabolic intermediate biosynthesis; chorismate biosynthesis; chorismate from D-erythrose 4-phosphate and phosphoenolpyruvate: step 3/7. Its function is as follows. Catalyzes a trans-dehydration via an enolate intermediate. The sequence is that of 3-dehydroquinate dehydratase from Helicobacter hepaticus (strain ATCC 51449 / 3B1).